A 399-amino-acid chain; its full sequence is Pyridinium-3,5-bisthiocarboxylic acid mononucleotide nickel insertion protein (399 aa).

This sequence belongs to the LarC family.

It catalyses the reaction Ni(II)-pyridinium-3,5-bisthiocarboxylate mononucleotide = pyridinium-3,5-bisthiocarboxylate mononucleotide + Ni(2+). In terms of biological role, involved in the biosynthesis of a nickel-pincer cofactor ((SCS)Ni(II) pincer complex). Binds Ni(2+), and functions in nickel delivery to pyridinium-3,5-bisthiocarboxylic acid mononucleotide (P2TMN), to form the mature cofactor. Is thus probably required for the activation of nickel-pincer cofactor-dependent enzymes. The protein is Pyridinium-3,5-bisthiocarboxylic acid mononucleotide nickel insertion protein of Clostridium kluyveri (strain ATCC 8527 / DSM 555 / NBRC 12016 / NCIMB 10680 / K1).